A 241-amino-acid chain; its full sequence is Superantigen-like protein 13 (241 aa).

Residues 1–26 (MNNNITKKIILSTTLLLLGTASTQFP) form the signal peptide.

Belongs to the staphylococcal/streptococcal toxin family. As to quaternary structure, interacts with host FPR2; this interaction promotes neutrophil chemotaxis.

Functionally, acts as a pathogen alarming molecule by acting on host neutrophil chemotactic factors FPR2. Plays a role of chemoattractant and induces degranulation and oxidative burst in neutrophils. In Staphylococcus aureus (strain Newman), this protein is Superantigen-like protein 13.